A 469-amino-acid chain; its full sequence is Probable Xaa-Pro aminopeptidase PEPP (469 aa).

Residues Asp-265, Asp-276, Glu-399, and Glu-439 each contribute to the Mn(2+) site.

It belongs to the peptidase M24B family. It depends on Mn(2+) as a cofactor.

The enzyme catalyses Release of any N-terminal amino acid, including proline, that is linked to proline, even from a dipeptide or tripeptide.. Catalyzes the removal of a penultimate prolyl residue from the N-termini of peptides. The polypeptide is Probable Xaa-Pro aminopeptidase PEPP (PEPP) (Coccidioides posadasii (strain C735) (Valley fever fungus)).